The chain runs to 517 residues: Heat shock 70-related protein 5 (517 aa).

The protein belongs to the heat shock protein 70 family.

May function in protein folding and assembly, and disassembly of protein complexes. The protein is Heat shock 70-related protein 5 of Dictyostelium discoideum (Social amoeba).